Consider the following 429-residue polypeptide: Adenylosuccinate synthetase (429 aa).

GTP contacts are provided by residues 12–18 (GDEGKGK) and 40–42 (GHT). Asp13 functions as the Proton acceptor in the catalytic mechanism. Mg(2+) contacts are provided by Asp13 and Gly40. IMP-binding positions include 13 to 16 (DEGK), 38 to 41 (NAGH), Thr129, Arg143, Gln223, Thr238, and Arg302. Residue His41 is the Proton donor of the active site. Substrate is bound at residue 298–304 (TVTGRKR). GTP-binding positions include Arg304, 330–332 (KLD), and 412–414 (STS).

The protein belongs to the adenylosuccinate synthetase family. Homodimer. It depends on Mg(2+) as a cofactor.

It is found in the cytoplasm. It catalyses the reaction IMP + L-aspartate + GTP = N(6)-(1,2-dicarboxyethyl)-AMP + GDP + phosphate + 2 H(+). It participates in purine metabolism; AMP biosynthesis via de novo pathway; AMP from IMP: step 1/2. In terms of biological role, plays an important role in the de novo pathway of purine nucleotide biosynthesis. Catalyzes the first committed step in the biosynthesis of AMP from IMP. This Sphingopyxis alaskensis (strain DSM 13593 / LMG 18877 / RB2256) (Sphingomonas alaskensis) protein is Adenylosuccinate synthetase.